Here is a 513-residue protein sequence, read N- to C-terminus: Meiotically up-regulated gene 133 protein (513 aa).

This sequence belongs to the UPF0300 family.

It is found in the golgi apparatus. The protein resides in the vacuole membrane. In terms of biological role, has a role in meiosis. This Schizosaccharomyces pombe (strain 972 / ATCC 24843) (Fission yeast) protein is Meiotically up-regulated gene 133 protein (mug133).